The following is a 458-amino-acid chain: Glycogen synthase (458 aa).

Position 15 (Lys15) interacts with ADP-alpha-D-glucose.

The protein belongs to the glycosyltransferase 1 family. Bacterial/plant glycogen synthase subfamily.

It carries out the reaction [(1-&gt;4)-alpha-D-glucosyl](n) + ADP-alpha-D-glucose = [(1-&gt;4)-alpha-D-glucosyl](n+1) + ADP + H(+). Its pathway is glycan biosynthesis; glycogen biosynthesis. Its function is as follows. Synthesizes alpha-1,4-glucan chains using ADP-glucose. The polypeptide is Glycogen synthase (Gloeobacter violaceus (strain ATCC 29082 / PCC 7421)).